The following is a 509-amino-acid chain: Photosystem II CP47 reaction center protein (509 aa).

Transmembrane regions (helical) follow at residues 21-36 (AVHLMHTALVAGWAGS), 101-115 (IVLSGMLFLAAIWHW), 140-156 (GIHLLLSSLLCFGFGAF), 203-218 (IAAGTVGILAGVFHLT), 237-252 (VLSSSISAVFFSAFVT), and 457-472 (NFALIFFFGHLWHGSR).

The protein belongs to the PsbB/PsbC family. PsbB subfamily. In terms of assembly, PSII is composed of 1 copy each of membrane proteins PsbA, PsbB, PsbC, PsbD, PsbE, PsbF, PsbH, PsbI, PsbJ, PsbK, PsbL, PsbM, PsbT, PsbX, PsbY, PsbZ, Psb30/Ycf12, at least 3 peripheral proteins of the oxygen-evolving complex and a large number of cofactors. It forms dimeric complexes. Binds multiple chlorophylls. PSII binds additional chlorophylls, carotenoids and specific lipids. is required as a cofactor.

It is found in the plastid. The protein resides in the chloroplast thylakoid membrane. One of the components of the core complex of photosystem II (PSII). It binds chlorophyll and helps catalyze the primary light-induced photochemical processes of PSII. PSII is a light-driven water:plastoquinone oxidoreductase, using light energy to abstract electrons from H(2)O, generating O(2) and a proton gradient subsequently used for ATP formation. This is Photosystem II CP47 reaction center protein from Pyropia yezoensis (Susabi-nori).